We begin with the raw amino-acid sequence, 867 residues long: MTTFMVSKRFRPPIFLHRFINPKPISSQTRFLHPPDNQSRDISDSTTETISTLEFPHKTSVPNHSPLTSTSETENHVDDARVIEVLLGRRNDPVSALQYCNWVKPLHRLCEGGDVFWVLIHILLSSIHTHDRASNLLVMFVSNNPTLIPNVMVNNLVDSSKRFGFELTPRAFNYLLNAYIRNKRMDYAVDCFGLMVDRKVVPFVPYVNNVLSSLVRSNLIDEAKEIYNKMVLIGVAGDNVTTQLLMRASLRERKPEEAVKIFRRVMSRGAEPDGLLFSLAVQAACKTPDLVMALDLLREMRGKLGVPASQETYTSVIVAFVKEGNMEEAVRVMDEMVGFGIPMSVIAATSLVNGYCKGNELGKALDLFNRMEEEGLAPDKVMFSVMVEWFCKNMEMEKAIEFYMRMKSVRIAPSSVLVHTMIQGCLKAESPEAALEIFNDSFESWIAHGFMCNKIFLLFCKQGKVDAATSFLKMMEQKGIEPNVVFYNNMMLAHCRMKNMDLARSIFSEMLEKGLEPNNFTYSILIDGFFKNKDEQNAWDVINQMNASNFEANEVIYNTIINGLCKVGQTSKAKEMLQNLIKEKRYSMSCTSYNSIIDGFVKVGDTDSAVETYREMSENGKSPNVVTFTSLINGFCKSNRMDLALEMTHEMKSMELKLDLPAYGALIDGFCKKNDMKTAYTLFSELPELGLMPNVSVYNSLISGFRNLGKMDAAIDLYKKMVNDGISCDLFTYTTMIDGLLKDGNINLASDLYSELLDLGIVPDEILHMVLVNGLSKKGQFLKASKMLEEMKKKDVTPNVLLYSTVIAGHHREGNLNEAFRLHDEMLEKGIVHDDTVFNLLVSGRVEKPPAASKISSLASPEMRSSY.

The transit peptide at 1–49 (MTTFMVSKRFRPPIFLHRFINPKPISSQTRFLHPPDNQSRDISDSTTET) directs the protein to the mitochondrion. The segment at 27–74 (SQTRFLHPPDNQSRDISDSTTETISTLEFPHKTSVPNHSPLTSTSETE) is disordered. Positions 60–72 (SVPNHSPLTSTSE) are enriched in polar residues. 19 PPR repeats span residues 168–202 (TPRAFNYLLNAYIRNKRMDYAVDCFGLMVDRKVVP), 203–237 (FVPYVNNVLSSLVRSNLIDEAKEIYNKMVLIGVAG), 238–272 (DNVTTQLLMRASLRERKPEEAVKIFRRVMSRGAEP), 273–307 (DGLLFSLAVQAACKTPDLVMALDLLREMRGKLGVP), 309–343 (SQETYTSVIVAFVKEGNMEEAVRVMDEMVGFGIPM), 344–378 (SVIAATSLVNGYCKGNELGKALDLFNRMEEEGLAP), 379–413 (DKVMFSVMVEWFCKNMEMEKAIEFYMRMKSVRIAP), 414–444 (SSVLVHTMIQGCLKAESPEAALEIFNDSFES), 448–482 (HGFMCNKIFLLFCKQGKVDAATSFLKMMEQKGIEP), 483–517 (NVVFYNNMMLAHCRMKNMDLARSIFSEMLEKGLEP), 518–552 (NNFTYSILIDGFFKNKDEQNAWDVINQMNASNFEA), 553–588 (NEVIYNTIINGLCKVGQTSKAKEMLQNLIKEKRYSM), 589–623 (SCTSYNSIIDGFVKVGDTDSAVETYREMSENGKSP), 624–658 (NVVTFTSLINGFCKSNRMDLALEMTHEMKSMELKL), 659–693 (DLPAYGALIDGFCKKNDMKTAYTLFSELPELGLMP), 694–728 (NVSVYNSLISGFRNLGKMDAAIDLYKKMVNDGISC), 729–763 (DLFTYTTMIDGLLKDGNINLASDLYSELLDLGIVP), 764–798 (DEILHMVLVNGLSKKGQFLKASKMLEEMKKKDVTP), and 799–833 (NVLLYSTVIAGHHREGNLNEAFRLHDEMLEKGIVH).

The protein belongs to the PPR family. P subfamily. Expressed in lateral organ junctions and shoot apical meristem (SAM).

The protein resides in the mitochondrion. Involved in lateral organ development and boundary demarcation. The chain is Pentatricopeptide repeat-containing protein At2g39230, mitochondrial (LOJ) from Arabidopsis thaliana (Mouse-ear cress).